The sequence spans 206 residues: Holliday junction branch migration complex subunit RuvA (206 aa).

The segment at 1 to 64 (MIAKLTGLLD…EDNIQLFGFA (64 aa)) is domain I. Residues 65–143 (DTEERDWFRL…SFGAPAPAAA (79 aa)) form a domain II region. Positions 144 to 154 (TAGKGGAAPAG) are flexible linker. Residues 154–206 (GPAGAVADAVSALVNLGYRRVEAFTAVNAVAQRLGPEAGVSDLIRAGLKELSP) are domain III.

The protein belongs to the RuvA family. Homotetramer. Forms an RuvA(8)-RuvB(12)-Holliday junction (HJ) complex. HJ DNA is sandwiched between 2 RuvA tetramers; dsDNA enters through RuvA and exits via RuvB. An RuvB hexamer assembles on each DNA strand where it exits the tetramer. Each RuvB hexamer is contacted by two RuvA subunits (via domain III) on 2 adjacent RuvB subunits; this complex drives branch migration. In the full resolvosome a probable DNA-RuvA(4)-RuvB(12)-RuvC(2) complex forms which resolves the HJ.

Its subcellular location is the cytoplasm. Functionally, the RuvA-RuvB-RuvC complex processes Holliday junction (HJ) DNA during genetic recombination and DNA repair, while the RuvA-RuvB complex plays an important role in the rescue of blocked DNA replication forks via replication fork reversal (RFR). RuvA specifically binds to HJ cruciform DNA, conferring on it an open structure. The RuvB hexamer acts as an ATP-dependent pump, pulling dsDNA into and through the RuvAB complex. HJ branch migration allows RuvC to scan DNA until it finds its consensus sequence, where it cleaves and resolves the cruciform DNA. This Rhodospirillum centenum (strain ATCC 51521 / SW) protein is Holliday junction branch migration complex subunit RuvA.